Here is a 211-residue protein sequence, read N- to C-terminus: Regulator of G-protein signaling 2 (211 aa).

2 disordered regions span residues 14–33 and 49–71; these read GPMD…REKM and LQNS…TFIK. Residues 32–66 form a necessary for membrane association region; that stretch reads KMKRTLLKDWKSRLSYFLQNSSSPGKPKTGKKSKQ. Residues 79-116 form a necessary to inhibit protein synthesis region; sequence LWSEAFDELLASKYGLAAFRAFLKSEFCEENIEFWLAC. The region spanning 83–199 is the RGS domain; sequence AFDELLASKY…LESEFYQDLC (117 aa).

Interacts with GNAQ. Does not interact with GNAI1 and GNAI3. Interacts with EIF2B5. Interacts with PRKG1 (isoform alpha). Phosphorylated by protein kinase C. Phosphorylation by PRKG1 leads to activation of RGS2 activity.

Its subcellular location is the cell membrane. It is found in the cytoplasm. The protein resides in the nucleus. The protein localises to the nucleolus. Regulates G protein-coupled receptor signaling cascades. Inhibits signal transduction by increasing the GTPase activity of G protein alpha subunits, thereby driving them into their inactive GDP-bound form. It is involved in the negative regulation of the angiotensin-activated signaling pathway. Plays a role in the regulation of blood pressure in response to signaling via G protein-coupled receptors and GNAQ. Plays a role in regulating the constriction and relaxation of vascular smooth muscle. Binds EIF2B5 and blocks its activity, thereby inhibiting the translation of mRNA into protein. The polypeptide is Regulator of G-protein signaling 2 (RGS2) (Bos taurus (Bovine)).